The sequence spans 32 residues: Hainantoxin F8-35.23 (32 aa).

As to expression, expressed by the venom gland.

The protein localises to the secreted. The polypeptide is Hainantoxin F8-35.23 (Cyriopagopus hainanus (Chinese bird spider)).